The chain runs to 201 residues: Adenylyl-sulfate kinase (201 aa).

Positions 1–23 (MALHDENVVWHSHPVTPQQREQH) are disordered. An ATP-binding site is contributed by 35–42 (GLSGSGKS). The active-site Phosphoserine intermediate is Ser109.

It belongs to the APS kinase family.

The catalysed reaction is adenosine 5'-phosphosulfate + ATP = 3'-phosphoadenylyl sulfate + ADP + H(+). The protein operates within sulfur metabolism; hydrogen sulfide biosynthesis; sulfite from sulfate: step 2/3. Its function is as follows. Catalyzes the synthesis of activated sulfate. The polypeptide is Adenylyl-sulfate kinase (Escherichia coli O127:H6 (strain E2348/69 / EPEC)).